The chain runs to 644 residues: Exoribonuclease 2 (644 aa).

The RNB domain occupies 189–516; the sequence is RRDLTALDFV…NHRLLKAIIK (328 aa). An S1 motif domain is found at 561–643; the sequence is DTRFAAEIID…ETRSIIARPA (83 aa).

The protein belongs to the RNR ribonuclease family. RNase II subfamily.

It is found in the cytoplasm. It catalyses the reaction Exonucleolytic cleavage in the 3'- to 5'-direction to yield nucleoside 5'-phosphates.. Its function is as follows. Involved in mRNA degradation. Hydrolyzes single-stranded polyribonucleotides processively in the 3' to 5' direction. This Klebsiella pneumoniae subsp. pneumoniae (strain ATCC 700721 / MGH 78578) protein is Exoribonuclease 2.